Here is a 303-residue protein sequence, read N- to C-terminus: MADQKILWGIAPIGWRNDDIPEIGAGNTLSHLLSDIVVARFQGTEVGGFFPDAKTLNKELELRNLKIAGQWFSSYLIRDPFESVSKEFHAHCAYLEEVGASVAVVSEQTYSIQQSEQNIFTEKPMFTDSEWLTLCEGLNELGKIAQQYGLTLVYHHHMGTGVQTLAEVDRLMENTDPTLVSLLYDTGHIYVSDNDYMLLLTKHLDRIKHVHFKDVRSDILAKCQEQGQSFLQSFLAGMFTVPGDGCIDFTKVYDVLLTHDYRGWIVVEAEQDPAKAHPLEYALKARQYIDEKLLTTDEMKERI.

This sequence belongs to the IolE/MocC family. Requires glutathione as cofactor. It depends on Co(2+) as a cofactor. Mn(2+) serves as cofactor.

It catalyses the reaction scyllo-inosose = 3D-3,5/4-trihydroxycyclohexane-1,2-dione + H2O. It functions in the pathway polyol metabolism; myo-inositol degradation into acetyl-CoA; acetyl-CoA from myo-inositol: step 2/7. Catalyzes the dehydration of inosose (2-keto-myo-inositol, 2KMI or 2,4,6/3,5-pentahydroxycyclohexanone) to 3D-(3,5/4)-trihydroxycyclohexane-1,2-dione (D-2,3-diketo-4-deoxy-epi-inositol). This Halalkalibacterium halodurans (strain ATCC BAA-125 / DSM 18197 / FERM 7344 / JCM 9153 / C-125) (Bacillus halodurans) protein is Inosose dehydratase.